A 271-amino-acid chain; its full sequence is Vacuolar arginine/histidine antiporter stm1 (271 aa).

Residues 14–80 form the PQ-loop 1 domain; that stretch reads LTELSSFLGA…GNVSSTVLVL (67 aa). 3 consecutive transmembrane segments (helical) span residues 17 to 37, 49 to 69, and 77 to 97; these read LSSF…IPQL, ISDL…LGSI, and VLVL…QIYY. Ser119 bears the Phosphoserine mark. The next 4 membrane-spanning stretches (helical) occupy residues 144–164, 178–198, 211–231, and 245–265; these read FGVM…IISS, PFTA…PQII, IIFF…ILVF, and PWIL…YQFI. The PQ-loop 2 domain occupies 185-239; sequence SSVLYFCARIPQIIKNHKAKSTEGLSIIFFVLASVGNTSYAFSILVFPASDYLNY.

The protein belongs to the laat-1 family.

It localises to the vacuole membrane. The catalysed reaction is L-histidine(out) + L-arginine(in) = L-histidine(in) + L-arginine(out). In terms of biological role, amino acid transporter that moves basic amino acids across the vacuolar membrane. Appears to function as an arginine/histidine antiporter. The sequence is that of Vacuolar arginine/histidine antiporter stm1 (stm1) from Schizosaccharomyces pombe (strain 972 / ATCC 24843) (Fission yeast).